We begin with the raw amino-acid sequence, 386 residues long: Magnesium transporter MRS2-7 (386 aa).

Transmembrane regions (helical) follow at residues 321-341 and 355-375; these read LMLS…GIFG and IFKW…VIIL. The Required for magnesium transport activity signature appears at 341–343; that stretch reads GMN.

The protein belongs to the CorA metal ion transporter (MIT) (TC 1.A.35.5) family. In terms of tissue distribution, isoform 1 is expressed in the whole plant. Isoform 4 is expressed only in roots and flowers.

The protein resides in the endoplasmic reticulum membrane. Its function is as follows. Low-affinity magnesium transporter that mediates the influx of magnesium. The chain is Magnesium transporter MRS2-7 (MRS2-7) from Arabidopsis thaliana (Mouse-ear cress).